A 276-amino-acid chain; its full sequence is Mitochondrial outer membrane protein porin 6 (276 aa).

It belongs to the eukaryotic mitochondrial porin (TC 1.B.8.1) family.

The protein resides in the mitochondrion outer membrane. Forms a channel through the mitochondrial outer membrane that allows diffusion of small hydrophilic molecules. The channel adopts an open conformation at low or zero membrane potential and a closed conformation at potentials above 30-40 mV. The open state has a weak anion selectivity whereas the closed state is cation-selective. The chain is Mitochondrial outer membrane protein porin 6 (VDAC6) from Oryza sativa subsp. japonica (Rice).